A 489-amino-acid polypeptide reads, in one-letter code: Beta-galactosidase (489 aa).

Lysine 116 bears the N6-methyllysine; partial mark. At lysine 135 the chain carries N6-methyllysine. Glutamate 206 acts as the Proton donor in catalysis. N6-methyllysine; partial is present on residues lysine 273 and lysine 311. The residue at position 332 (lysine 332) is an N6-methyllysine. Glutamate 387 functions as the Nucleophile in the catalytic mechanism.

As to quaternary structure, homotetramer.

The enzyme catalyses Hydrolysis of terminal non-reducing beta-D-galactose residues in beta-D-galactosides.. This is Beta-galactosidase (lacS) from Saccharolobus solfataricus (strain ATCC 35092 / DSM 1617 / JCM 11322 / P2) (Sulfolobus solfataricus).